The primary structure comprises 616 residues: Dihydroxy-acid dehydratase (616 aa).

A Mg(2+)-binding site is contributed by Asp81. Cys122 contributes to the [2Fe-2S] cluster binding site. Asp123 and Lys124 together coordinate Mg(2+). The residue at position 124 (Lys124) is an N6-carboxylysine. Cys195 serves as a coordination point for [2Fe-2S] cluster. Residue Glu491 participates in Mg(2+) binding. The Proton acceptor role is filled by Ser517.

Belongs to the IlvD/Edd family. Homodimer. The cofactor is [2Fe-2S] cluster. Mg(2+) serves as cofactor.

It catalyses the reaction (2R)-2,3-dihydroxy-3-methylbutanoate = 3-methyl-2-oxobutanoate + H2O. It carries out the reaction (2R,3R)-2,3-dihydroxy-3-methylpentanoate = (S)-3-methyl-2-oxopentanoate + H2O. The protein operates within amino-acid biosynthesis; L-isoleucine biosynthesis; L-isoleucine from 2-oxobutanoate: step 3/4. It participates in amino-acid biosynthesis; L-valine biosynthesis; L-valine from pyruvate: step 3/4. In terms of biological role, functions in the biosynthesis of branched-chain amino acids. Catalyzes the dehydration of (2R,3R)-2,3-dihydroxy-3-methylpentanoate (2,3-dihydroxy-3-methylvalerate) into 2-oxo-3-methylpentanoate (2-oxo-3-methylvalerate) and of (2R)-2,3-dihydroxy-3-methylbutanoate (2,3-dihydroxyisovalerate) into 2-oxo-3-methylbutanoate (2-oxoisovalerate), the penultimate precursor to L-isoleucine and L-valine, respectively. The sequence is that of Dihydroxy-acid dehydratase from Shewanella loihica (strain ATCC BAA-1088 / PV-4).